The following is a 712-amino-acid chain: Rap1 GTPase-activating protein 2 (712 aa).

A disordered region spans residues 1–33 (MLAGLKVKKQELANSSDVTLPDRPLSPPLTAPP). Ser-26 bears the Phosphoserine mark. Thr-30 bears the Phosphothreonine mark. The Rap-GAP domain maps to 229–445 (IVSYDEHDVN…RTRAALLDNL (217 aa)). 7 positions are modified to phosphoserine: Ser-488, Ser-495, Ser-525, Ser-539, Ser-545, Ser-593, and Ser-594. The tract at residues 529 to 712 (AAATAKNQSR…LSHASSSAGH (184 aa)) is disordered. Residues 566 to 594 (DSASSTPKTPDGGHSSQEIKSETSSNPSS) are compositionally biased toward polar residues. Over residues 599 to 612 (PNKEKPFIKLKENG) the composition is skewed to basic and acidic residues. The span at 617–629 (SRSSSSTSSFSST) shows a compositional bias: low complexity. The span at 641-652 (SGSSQPSTTSPF) shows a compositional bias: polar residues. Residues 660 to 669 (SPSPSSESPS) show a composition bias toward low complexity. The span at 681 to 694 (RSPTDAKSRNSPRS) shows a compositional bias: polar residues.

The protein localises to the cytoplasm. Its function is as follows. GTPase activator for the nuclear Ras-related regulatory protein RAP-1A (KREV-1), converting it to the putatively inactive GDP-bound state. The protein is Rap1 GTPase-activating protein 2 (Rap1gap2) of Mus musculus (Mouse).